Reading from the N-terminus, the 268-residue chain is MRLIPLKTAQQVSKWAAKYIVDRINTFAPTAERPFVLGLPTGGTPLQTYKELIKLYQAEEVSFKYVVTFNMDEYVGLPKEHPESYHSFMYNNFFNHIDIQPQNINILDGNTDDHDEECRRYEEKIKSYGKINLFMGGVGVDGHIAFNEPASSLASRTRIKTLTEDTLIANSRFFDNDVTKVPKYALTIGVATLLDAEEVMLLVTGHNKALALQAGVEGNVNHFWTISALQLHRHAIFVCDEPATQELKVKTVKYFTELEQRAIHSVLD.

Residue aspartate 72 is the Proton acceptor; for enolization step of the active site. The active-site For ring-opening step is the aspartate 141. The active-site Proton acceptor; for ring-opening step is histidine 143. Glutamate 148 (for ring-opening step) is an active-site residue.

This sequence belongs to the glucosamine/galactosamine-6-phosphate isomerase family. NagB subfamily. In terms of assembly, homohexamer.

The catalysed reaction is alpha-D-glucosamine 6-phosphate + H2O = beta-D-fructose 6-phosphate + NH4(+). Its pathway is amino-sugar metabolism; N-acetylneuraminate degradation; D-fructose 6-phosphate from N-acetylneuraminate: step 5/5. Allosterically activated by N-acetylglucosamine 6-phosphate (GlcNAc6P). Its function is as follows. Catalyzes the reversible isomerization-deamination of glucosamine 6-phosphate (GlcN6P) to form fructose 6-phosphate (Fru6P) and ammonium ion. This chain is Glucosamine-6-phosphate deaminase, found in Histophilus somni (strain 2336) (Haemophilus somnus).